We begin with the raw amino-acid sequence, 295 residues long: Nucleotide-binding protein LACR_1047 (295 aa).

An ATP-binding site is contributed by 12–19 (GMSGAGKT). Residue 63–66 (DMRS) coordinates GTP.

Belongs to the RapZ-like family.

Displays ATPase and GTPase activities. The sequence is that of Nucleotide-binding protein LACR_1047 from Lactococcus lactis subsp. cremoris (strain SK11).